The chain runs to 555 residues: Glucose-6-phosphate isomerase (555 aa).

The Proton donor role is filled by Glu-365. Residues His-396 and Lys-522 contribute to the active site.

The protein belongs to the GPI family.

The protein localises to the cytoplasm. The catalysed reaction is alpha-D-glucose 6-phosphate = beta-D-fructose 6-phosphate. The protein operates within carbohydrate biosynthesis; gluconeogenesis. It participates in carbohydrate degradation; glycolysis; D-glyceraldehyde 3-phosphate and glycerone phosphate from D-glucose: step 2/4. In terms of biological role, catalyzes the reversible isomerization of glucose-6-phosphate to fructose-6-phosphate. The polypeptide is Glucose-6-phosphate isomerase (Psychrobacter cryohalolentis (strain ATCC BAA-1226 / DSM 17306 / VKM B-2378 / K5)).